Consider the following 233-residue polypeptide: 2,3-bisphosphoglycerate-dependent phosphoglycerate mutase (233 aa).

Residues R8 to N15, T21 to G22, R60, E87 to Y90, K98, R114 to R115, and G183 to N184 each bind substrate. H9 functions as the Tele-phosphohistidine intermediate in the catalytic mechanism. E87 acts as the Proton donor/acceptor in catalysis.

It belongs to the phosphoglycerate mutase family. BPG-dependent PGAM subfamily.

The enzyme catalyses (2R)-2-phosphoglycerate = (2R)-3-phosphoglycerate. The protein operates within carbohydrate degradation; glycolysis; pyruvate from D-glyceraldehyde 3-phosphate: step 3/5. Its function is as follows. Catalyzes the interconversion of 2-phosphoglycerate and 3-phosphoglycerate. This is 2,3-bisphosphoglycerate-dependent phosphoglycerate mutase from Lactococcus lactis subsp. cremoris (strain MG1363).